The sequence spans 192 residues: tRNA (pseudouridine(54)-N(1))-methyltransferase (192 aa).

Residues Leu-127 and Cys-181 each contribute to the S-adenosyl-L-methionine site.

Belongs to the methyltransferase superfamily. TrmY family. In terms of assembly, homodimer.

It is found in the cytoplasm. The enzyme catalyses pseudouridine(54) in tRNA + S-adenosyl-L-methionine = N(1)-methylpseudouridine(54) in tRNA + S-adenosyl-L-homocysteine + H(+). Functionally, specifically catalyzes the N1-methylation of pseudouridine at position 54 (Psi54) in tRNAs. The polypeptide is tRNA (pseudouridine(54)-N(1))-methyltransferase (Methanocella arvoryzae (strain DSM 22066 / NBRC 105507 / MRE50)).